The chain runs to 678 residues: Protein mono-ADP-ribosyltransferase PARP15 (678 aa).

The span at methionine 1–proline 19 shows a compositional bias: low complexity. Residues methionine 1 to lysine 67 form a disordered region. The segment covering glycine 49–serine 58 has biased composition (basic residues). 2 Macro domains span residues asparagine 78–serine 267 and cysteine 293–aspartate 464. Residues aspartate 312–isoleucine 313, serine 324–threonine 325, arginine 331, valine 335, glycine 409–alanine 413, and glutamine 449 each bind substrate. Positions leucine 482–alanine 678 constitute a PARP catalytic domain.

This sequence belongs to the ARTD/PARP family.

Its subcellular location is the nucleus. It carries out the reaction L-aspartyl-[protein] + NAD(+) = 4-O-(ADP-D-ribosyl)-L-aspartyl-[protein] + nicotinamide. It catalyses the reaction L-glutamyl-[protein] + NAD(+) = 5-O-(ADP-D-ribosyl)-L-glutamyl-[protein] + nicotinamide. Mono-ADP-ribosyltransferase that mediates mono-ADP-ribosylation of target proteins. Acts as a negative regulator of transcription. In Homo sapiens (Human), this protein is Protein mono-ADP-ribosyltransferase PARP15.